The sequence spans 70 residues: U2-agatoxin-Ao1m (70 aa).

A signal peptide spans 1–20 (MRAIISLFLISAMVFSMIQA). Positions 21-34 (VPEEXGLQLSEDER) are excised as a propeptide. 3 cysteine pairs are disulfide-bonded: cysteine 37–cysteine 53, cysteine 44–cysteine 58, and cysteine 52–cysteine 68. The residue at position 69 (leucine 69) is a Leucine amide.

Belongs to the neurotoxin 01 (U2-agtx) family. As to expression, expressed by the venom gland.

The protein resides in the secreted. Functionally, insect active toxin causing rapid but reversible paralysis in crickets. No activity shown in mammals. Does not show effect on mammalian voltage-gated calcium channels. The sequence is that of U2-agatoxin-Ao1m from Agelena orientalis (Funnel-web spider).